A 196-amino-acid chain; its full sequence is Ribose 1,5-bisphosphate phosphokinase PhnN (196 aa).

The protein belongs to the ribose 1,5-bisphosphokinase family.

It catalyses the reaction alpha-D-ribose 1,5-bisphosphate + ATP = 5-phospho-alpha-D-ribose 1-diphosphate + ADP. It participates in metabolic intermediate biosynthesis; 5-phospho-alpha-D-ribose 1-diphosphate biosynthesis; 5-phospho-alpha-D-ribose 1-diphosphate from D-ribose 5-phosphate (route II): step 3/3. Its function is as follows. Catalyzes the phosphorylation of ribose 1,5-bisphosphate to 5-phospho-D-ribosyl alpha-1-diphosphate (PRPP). In Psychromonas ingrahamii (strain DSM 17664 / CCUG 51855 / 37), this protein is Ribose 1,5-bisphosphate phosphokinase PhnN.